A 609-amino-acid chain; its full sequence is Spore coat protein homolog 1 (609 aa).

The N-terminal stretch at 1 to 17 is a signal peptide; sequence MKSLLFVVFIFLTTTYA. Asn82, Asn397, and Asn440 each carry an N-linked (GlcNAc...) asparagine glycan. Residues 527–547 form a disordered region; the sequence is TVTQVPEAPGTDGTPSESTAW. Residue Ser584 is the site of GPI-anchor amidated serine attachment. Residues 585-609 constitute a propeptide, removed in mature form; that stretch reads SSSIKRTPCILPLVILASTLFASFF.

It is found in the cell membrane. Functionally, may play a role in cell adhesion. This is Spore coat protein homolog 1 from Rhizopus delemar (strain RA 99-880 / ATCC MYA-4621 / FGSC 9543 / NRRL 43880) (Mucormycosis agent).